Here is a 664-residue protein sequence, read N- to C-terminus: E3 ubiquitin-protein ligase CHFR (664 aa).

The interval 1-21 (MERPEEGKQSPPPQPWGRLLR) is disordered. Residues 38–89 (WTIGRRRGCDLSFPSNKLVSGDHCRIVVDEKSGQVTLEDTSTSGTVINKLKV) form the FHA domain. The segment at 142 to 267 (FHGTKDTSGA…KKMRGDGDLD (126 aa)) is disordered. A compositionally biased stretch (low complexity) spans 186–198 (PTASASSTEPSPA). The residue at position 244 (Ser-244) is a Phosphoserine. A compositionally biased stretch (basic and acidic residues) spans 254–264 (EPVKKKMRGDG). Residues 304–343 (CIICQDLLHDCVSLQPCMHTFCAACYSGWMERSSLCPTCR) form an RING-type zinc finger. The residue at position 386 (Thr-386) is a Phosphothreonine. Disordered stretches follow at residues 388 to 417 (DMLQ…VDSE) and 439 to 461 (AQPP…GDAP). A compositionally biased stretch (acidic residues) spans 400-417 (DEEGSSEDLLELSDVDSE). The segment at 633-655 (PDCYWGRNCRTQVKAHHAMKFNH) adopts a PBZ-type zinc-finger fold.

The protein belongs to the CHFR family. Interacts with HDAC1 and HDAC2. Interacts with PML (with sumoylated form of PML). Post-translationally, poly-ADP-ribosylated. In addition to binding non covalently poly(ADP-ribose) via its PBZ-type zinc finger, the protein is also covalently poly-ADP-ribosylated by PARP1. Autoubiquitinated; may regulate its cellular level. In terms of processing, phosphorylated by PKB. Phosphorylation may affect its E3 ligase activity. As to expression, ubiquitous.

It is found in the nucleus. Its subcellular location is the PML body. It carries out the reaction S-ubiquitinyl-[E2 ubiquitin-conjugating enzyme]-L-cysteine + [acceptor protein]-L-lysine = [E2 ubiquitin-conjugating enzyme]-L-cysteine + N(6)-ubiquitinyl-[acceptor protein]-L-lysine.. Its pathway is protein modification; protein ubiquitination. In terms of biological role, E3 ubiquitin-protein ligase that functions in the antephase checkpoint by actively delaying passage into mitosis in response to microtubule poisons. Acts in early prophase before chromosome condensation, when the centrosome move apart from each other along the periphery of the nucleus. Probably involved in signaling the presence of mitotic stress caused by microtubule poisons by mediating the 'Lys-48'-linked ubiquitination of target proteins, leading to their degradation by the proteasome. Promotes the ubiquitination and subsequent degradation of AURKA and PLK1. Probably acts as a tumor suppressor, possibly by mediating the polyubiquitination of HDAC1, leading to its degradation. May also promote the formation of 'Lys-63'-linked polyubiquitin chains and functions with the specific ubiquitin-conjugating UBC13-MMS2 (UBE2N-UBE2V2) heterodimer. Substrates that are polyubiquitinated at 'Lys-63' are usually not targeted for degradation, but are rather involved in signaling cellular stress. This Homo sapiens (Human) protein is E3 ubiquitin-protein ligase CHFR (CHFR).